We begin with the raw amino-acid sequence, 271 residues long: MKICIVSRIDLKEPVELAQSLGWMLRDQGHDVVYEQSVAAELGYAPVSLSKDFSADLIVVLGGDGSVLRTIRMLDHQVPVVGINQGQVGFLTDIERDKAEEILTSLSLPLPLDPRMRISIEFNGRSVGSALNEAVIVTSRPAKILKFAVFVNGRQIDEFRADGLIIGTPTGSTAYAMSAGGPIVDSTIEAMLLVPLAPYMLSSRPYLINSNSEVEIRLVSVKPALLVIDGQDQYEIGENATLLIRKSPDPALFVDVGRGFFDKVEQKLRLL.

The Proton acceptor role is filled by Asp64. NAD(+)-binding positions include 64-65, Arg69, 132-133, Lys143, Arg160, Asp162, 173-178, Ala197, and Gln231; these read DG, NE, and TAYAMS.

This sequence belongs to the NAD kinase family. A divalent metal cation serves as cofactor.

The protein resides in the cytoplasm. It carries out the reaction NAD(+) + ATP = ADP + NADP(+) + H(+). Involved in the regulation of the intracellular balance of NAD and NADP, and is a key enzyme in the biosynthesis of NADP. Catalyzes specifically the phosphorylation on 2'-hydroxyl of the adenosine moiety of NAD to yield NADP. The sequence is that of NAD kinase from Methanocorpusculum labreanum (strain ATCC 43576 / DSM 4855 / Z).